Here is a 459-residue protein sequence, read N- to C-terminus: Phosphoglucosamine mutase (459 aa).

Serine 112 functions as the Phosphoserine intermediate in the catalytic mechanism. Serine 112, aspartate 249, aspartate 251, and aspartate 253 together coordinate Mg(2+). Position 112 is a phosphoserine (serine 112).

Belongs to the phosphohexose mutase family. Mg(2+) serves as cofactor. Post-translationally, activated by phosphorylation.

The catalysed reaction is alpha-D-glucosamine 1-phosphate = D-glucosamine 6-phosphate. In terms of biological role, catalyzes the conversion of glucosamine-6-phosphate to glucosamine-1-phosphate. In Synechococcus sp. (strain RCC307), this protein is Phosphoglucosamine mutase.